Here is an 882-residue protein sequence, read N- to C-terminus: Liprin-beta-2 (882 aa).

Residues 101 to 303 (AASNETYQER…DKDRRIEELT (203 aa)) adopt a coiled-coil conformation. Phosphoserine is present on residues Ser328, Ser362, and Ser386. Positions 339–554 (RKWNTTNKSP…SRTRDTKGQK (216 aa)) are disordered. The span at 388–399 (EDLRRESGDKCV) shows a compositional bias: basic and acidic residues. Composition is skewed to polar residues over residues 442–457 (PTAS…SQPK) and 481–495 (SSAS…QSPV). Residues Ser502 and Ser518 each carry the phosphoserine modification. Over residues 502–515 (SPKGIKKFWGKIRR) the composition is skewed to basic residues. 3 consecutive SAM domains span residues 564–628 (WSTE…INAK), 636–699 (LDHI…LHVN), and 724–789 (WSNH…KFNA).

It belongs to the liprin family. Liprin-beta subfamily. Forms homodimers and heterodimers. Expressed widely. Strong expression in liver, kidney, intestine, heart, lung and testis. Low expression in brain and thymus.

Functionally, may regulate the disassembly of focal adhesions. Did not bind receptor-like tyrosine phosphatases type 2A. The polypeptide is Liprin-beta-2 (Ppfibp2) (Mus musculus (Mouse)).